A 72-amino-acid chain; its full sequence is MSKDDVIQMAGEVVENLPNAMFRVKLENGHVFLGHISGKMRMHYIRILPGDKVTVEMTPYDLTRARIIFRAK.

Residues 1–72 enclose the S1-like domain; sequence MSKDDVIQMA…TRARIIFRAK (72 aa).

It belongs to the IF-1 family. As to quaternary structure, component of the 30S ribosomal translation pre-initiation complex which assembles on the 30S ribosome in the order IF-2 and IF-3, IF-1 and N-formylmethionyl-tRNA(fMet); mRNA recruitment can occur at any time during PIC assembly.

It is found in the cytoplasm. In terms of biological role, one of the essential components for the initiation of protein synthesis. Stabilizes the binding of IF-2 and IF-3 on the 30S subunit to which N-formylmethionyl-tRNA(fMet) subsequently binds. Helps modulate mRNA selection, yielding the 30S pre-initiation complex (PIC). Upon addition of the 50S ribosomal subunit IF-1, IF-2 and IF-3 are released leaving the mature 70S translation initiation complex. This is Translation initiation factor IF-1 1 from Polynucleobacter asymbioticus (strain DSM 18221 / CIP 109841 / QLW-P1DMWA-1) (Polynucleobacter necessarius subsp. asymbioticus).